A 21-amino-acid chain; its full sequence is Tricyclic peptide MS-271 (21 aa).

A cross-link (3-cysteinyl-aspartic acid (Cys-Asp)) is located at residues 1–9 (CLGVGSCND). Cystine bridges form between Cys1/Cys13 and Cys7/Cys19. Trp21 is subject to D-tryptophan.

Functionally, inhibits chicken myosin light chain kinase with an IC(50) of 8 M. Does not inhibit bovine cAMP-dependent protein kinase or rat protein kinase C. Antibacterial activity against the Gram-positive bacteria B.subtilis, E.faecium and S.aureus. No antibacterial activity against the Gram-negative bacteria E.coli, K.pneumoniae, P.aeruginosa, P.vulgaris, S.sonnei and S.typhosa. No antifungal activity against C.albicans. The protein is Tricyclic peptide MS-271 of Streptomyces sp.